A 289-amino-acid chain; its full sequence is Inorganic pyrophosphatase (289 aa).

Position 2 is an N-acetylserine (serine 2). Lysine 57 is subject to N6-acetyllysine. Mg(2+) is bound by residues aspartate 116, aspartate 121, and aspartate 153. Lysine 228 is modified (N6-acetyllysine). A Phosphoserine modification is found at serine 250.

Belongs to the PPase family. In terms of assembly, homodimer. It depends on Mg(2+) as a cofactor.

It is found in the cytoplasm. It catalyses the reaction diphosphate + H2O = 2 phosphate + H(+). The polypeptide is Inorganic pyrophosphatase (Ppa1) (Mus musculus (Mouse)).